A 506-amino-acid chain; its full sequence is MSEQFILQPGQLSLLSIKQILDEELSCVLAENSFELIRASHQTVKKVIDEKKTVYGINTGFGSLANQTISSDCLKELQRNIVLSHACGTGKLLPDDVVALILLLKINNLSQGYSGVRLELINALIALFNHKVYPCIPSKGSVGASGDLVPLAHLSLPLLGEGEVRHQGQVISAEEGLKLAGLKPLELEAKEGLALLNGLQVSTALALSALFISETLFETAIISGSLSVDAASGSDVPFDDRIHQIRGHQAQISAASMYRNLLAGSQIRESHRHCNRVQDPYSLRCQPQIMGAILHQMQFVGQTLQVEANAISDNPLVFAEQGDILSGGNFHGEIIAMAADNLALALSEIGGSAERRIALLIDKNFSGLPAFLVRESGLNSGFMIAHVTAASCASDNKALAHPHSVDSLPTSANQEDHVSMATSAARRLHEMIDNTSTILAIELLAACQGLEFHKPLKTSPQLDKIYQSVRSVVKEYDKDRYFAPDIEKIKKKILDKEFSLLTLTNE.

The segment at residues 144 to 146 (ASG) is a cross-link (5-imidazolinone (Ala-Gly)). Serine 145 bears the 2,3-didehydroalanine (Ser) mark.

This sequence belongs to the PAL/histidase family. Contains an active site 4-methylidene-imidazol-5-one (MIO), which is formed autocatalytically by cyclization and dehydration of residues Ala-Ser-Gly.

The protein resides in the cytoplasm. The enzyme catalyses L-histidine = trans-urocanate + NH4(+). It participates in amino-acid degradation; L-histidine degradation into L-glutamate; N-formimidoyl-L-glutamate from L-histidine: step 1/3. This chain is Histidine ammonia-lyase, found in Legionella pneumophila subsp. pneumophila (strain Philadelphia 1 / ATCC 33152 / DSM 7513).